Consider the following 181-residue polypeptide: Large ribosomal subunit protein uL5 (181 aa).

It belongs to the universal ribosomal protein uL5 family. As to quaternary structure, part of the 50S ribosomal subunit; part of the 5S rRNA/L5/L18/L25 subcomplex. Contacts the 5S rRNA and the P site tRNA. Forms a bridge to the 30S subunit in the 70S ribosome.

This is one of the proteins that bind and probably mediate the attachment of the 5S RNA into the large ribosomal subunit, where it forms part of the central protuberance. In the 70S ribosome it contacts protein S13 of the 30S subunit (bridge B1b), connecting the 2 subunits; this bridge is implicated in subunit movement. Contacts the P site tRNA; the 5S rRNA and some of its associated proteins might help stabilize positioning of ribosome-bound tRNAs. This is Large ribosomal subunit protein uL5 from Mesomycoplasma hyopneumoniae (strain 232) (Mycoplasma hyopneumoniae).